Consider the following 753-residue polypeptide: Transcription factor SOX-30 (753 aa).

2 disordered regions span residues 1 to 45 and 137 to 161; these read MERA…TLSA and AKKQ…TGPR. Pro residues predominate over residues 7–23; sequence EPPPQPRPLRPAPPPLP. Positions 337–405 form a DNA-binding region, HMG box; it reads VKRPMNAFMV…KHREEFPGWV (69 aa). 2 disordered regions span residues 514–575 and 726–753; these read TGPS…SPCP and PTST…LRDL. 2 stretches are compositionally biased toward polar residues: residues 531 to 563 and 726 to 739; these read TVKQ…STIQ and PTST…VNVT.

As to quaternary structure, interacts with CTNNB1, competitively inhibiting CTNNB1-TCF7L2/TCF4 interaction.

It localises to the nucleus. Its subcellular location is the cytoplasm. In terms of biological role, acts both as a transcriptional activator and a repressor. Binds to the DNA sequence 5'-ACAAT-3' and shows a preference for guanine residues surrounding this core motif. Binds to its own promoter and activates its own transcription. Required to activate the expression of postmeiotic genes involved in spermiogenesis. Binds to the promoter region of CTNNB1 and represses its transcription which leads to inhibition of Wnt signaling. Also inhibits Wnt signaling by binding to the CTNNB1 protein, preventing interaction of CTNNB1 with TCF7L2/TCF4. This chain is Transcription factor SOX-30 (SOX30), found in Homo sapiens (Human).